Consider the following 146-residue polypeptide: Ferric uptake regulation protein 2 (146 aa).

Zn(2+) contacts are provided by Cys96 and Cys99.

The protein belongs to the Fur family.

Its subcellular location is the cytoplasm. In terms of biological role, acts as a global negative controlling element, employing Fe(2+) as a cofactor to bind the operator of the repressed genes. The sequence is that of Ferric uptake regulation protein 2 (fur2) from Mycolicibacterium fortuitum (Mycobacterium fortuitum).